Consider the following 1620-residue polypeptide: Putative zinc carboxypeptidase (1620 aa).

Residues 1–1367 (MLFKNEDSGN…SYDFLYFDEN (1367 aa)) lie on the Extracellular side of the membrane. Asn-19 carries N-linked (GlcNAc...) asparagine glycosylation. The segment at 32–74 (RNDNKNNDNEDNKQDDEEKNDEDDNKSNLLLEENEENKRQGDK) is disordered. Positions 33 to 43 (NDNKNNDNEDN) are enriched in basic and acidic residues. A compositionally biased stretch (acidic residues) spans 44-55 (KQDDEEKNDEDD). Residues Asn-56 and Asn-102 are each glycosylated (N-linked (GlcNAc...) asparagine). Residues 309 to 328 (GNHYDAHESTNTYDEEKTRE) form a disordered region. Asn-354, Asn-487, Asn-508, Asn-529, Asn-550, Asn-571, Asn-589, Asn-687, Asn-802, and Asn-1010 each carry an N-linked (GlcNAc...) asparagine glycan. Residues 497 to 559 (VNNLDSTVNY…NSTGNNINNI (63 aa)) form a possible malaria epitope region. Residues 1004-1261 (GENKKNNGTK…FYVQNYFEGY (258 aa)) form the Peptidase M14 domain. The Zn(2+) site is built by His-1059 and Glu-1062. N-linked (GlcNAc...) asparagine glycans are attached at residues Asn-1064 and Asn-1141. Residue His-1155 coordinates Zn(2+). Glu-1229 serves as the catalytic Proton donor/acceptor. The tract at residues 1279-1329 (NIKGDDNINGDDNIKGGDNIKGDDNIKRDDNFQRDDNFQRDDNFQRGDNFH) is disordered. A helical transmembrane segment spans residues 1368–1388 (LLFMTGVSFGICLFKFINFLS). The Cytoplasmic portion of the chain corresponds to 1389–1620 (YHKSSICRRT…SKRKKVIVIL (232 aa)). A disordered region spans residues 1560-1620 (PNGKYKGPGF…SKRKKVIVIL (61 aa)). Residues 1581 to 1597 (NKNESKTEKKSKTENKS) are compositionally biased toward basic and acidic residues. Positions 1598 to 1620 (KSKSKNKSKSKNKSKRKKVIVIL) are enriched in basic residues.

It belongs to the peptidase M14 family. It depends on Zn(2+) as a cofactor.

It localises to the membrane. This chain is Putative zinc carboxypeptidase, found in Plasmodium falciparum (isolate 3D7).